We begin with the raw amino-acid sequence, 88 residues long: Cell division topological specificity factor (88 aa).

Belongs to the MinE family.

In terms of biological role, prevents the cell division inhibition by proteins MinC and MinD at internal division sites while permitting inhibition at polar sites. This ensures cell division at the proper site by restricting the formation of a division septum at the midpoint of the long axis of the cell. The protein is Cell division topological specificity factor of Acidovorax ebreus (strain TPSY) (Diaphorobacter sp. (strain TPSY)).